We begin with the raw amino-acid sequence, 351 residues long: Anaerobic nitrite reductase Glb1-2 (351 aa).

Globin domains are found at residues 13–162 (DFTE…VEMK) and 184–333 (CFTE…AEMK). Heme b contacts are provided by Ser-56, Lys-70, His-74, Lys-104, Thr-108, His-109, Ser-227, Lys-241, His-245, Lys-275, Thr-279, and His-280. The disordered stretch occupies residues 331–351 (EMKKTDHDHQTNVEDKSKPSS).

The protein belongs to the plant globin family. As to quaternary structure, monomer. The cofactor is heme b. Predominantly expressed in nodules and roots, and, to a lesser extent, in leaves, at low levels in pods, but barely in stems, petioles, buds and flowers. As to expression, mainly expressed in nodules and roots at low levels, and barely in leaves. In terms of tissue distribution, expressed at very low levels in nodules, roots and pods.

Its subcellular location is the cytoplasm. The protein localises to the nucleus. It catalyses the reaction Fe(III)-heme b-[protein] + nitric oxide + H2O = Fe(II)-heme b-[protein] + nitrite + 2 H(+). In terms of biological role, phytoglobin that regulates the fine tuning of nitric oxide (NO) concentration in the cytosol in response to sudden changes in O(2) availability, and performs both symbiotic and nonsymbiotic functions. Exhibits NO dioxygenase activity in the presence of O(2) but nitrite reductase (NiR) activity in the absence of O(2) (e.g. during flooding or in waterlogged soil). May not function as an oxygen storage or transport protein. Extremely reactive toward the physiological ligands O(2), nitric oxide (NO), and nitrite with a very high affinity for O(2) through an hexacoordinate heme iron because of a very low dissociation constant. Very high affinity for O(2) through two hexacoordinate heme irons. Extremely reactive toward the physiological ligands O(2), nitric oxide (NO), and nitrite. Functionally, very high affinity for O(2) through a single hexacoordinate heme iron. Extremely reactive toward the physiological ligands O(2), nitric oxide (NO), and nitrite. In Medicago truncatula (Barrel medic), this protein is Anaerobic nitrite reductase Glb1-2.